We begin with the raw amino-acid sequence, 399 residues long: F-box/kelch-repeat protein At5g48980 (399 aa).

The segment covering Met1–Ser11 has biased composition (polar residues). The disordered stretch occupies residues Met1–Thr29. In terms of domain architecture, F-box spans Thr29–Arg75. Residues Ile199–Ser248 form a Kelch repeat.

The polypeptide is F-box/kelch-repeat protein At5g48980 (Arabidopsis thaliana (Mouse-ear cress)).